The primary structure comprises 267 residues: Regulatory protein VirG (267 aa).

The Response regulatory domain occupies 29–143 (HVLLVDDDVA…EFLARIRVAL (115 aa)). Asp78 carries the 4-aspartylphosphate modification. The segment at residues 155–255 (RRSFCFTDWT…ARGAGYFFDA (101 aa)) is a DNA-binding region (ompR/PhoB-type).

In terms of processing, phosphorylated by wide host range (WHR) VirA protein.

It is found in the cytoplasm. Functionally, virG is required for the positive regulation of at least two vir loci encoded by the Ti plasmid of A.tumefaciens. The polypeptide is Regulatory protein VirG (virG) (Agrobacterium tumefaciens (strain 15955)).